Here is a 520-residue protein sequence, read N- to C-terminus: GMP synthase [glutamine-hydrolyzing] (520 aa).

Positions 9-202 constitute a Glutamine amidotransferase type-1 domain; sequence SVLIVDFGSQ…IHNVAGIKGD (194 aa). Residue C86 is the Nucleophile of the active site. Catalysis depends on residues H176 and E178. The region spanning 203-395 is the GMPS ATP-PPase domain; the sequence is WSMSAYRQKA…LGLPDSFIGR (193 aa). 230 to 236 is a binding site for ATP; that stretch reads SGGVDSS.

Homodimer.

It carries out the reaction XMP + L-glutamine + ATP + H2O = GMP + L-glutamate + AMP + diphosphate + 2 H(+). Its pathway is purine metabolism; GMP biosynthesis; GMP from XMP (L-Gln route): step 1/1. Its function is as follows. Catalyzes the synthesis of GMP from XMP. The sequence is that of GMP synthase [glutamine-hydrolyzing] from Rhizobium etli (strain ATCC 51251 / DSM 11541 / JCM 21823 / NBRC 15573 / CFN 42).